A 197-amino-acid chain; its full sequence is Ribonuclease HII (197 aa).

Residues 4-197 (IWVCGVDEAG…VRKALESVAS (194 aa)) form the RNase H type-2 domain. 3 residues coordinate a divalent metal cation: Asp10, Glu11, and Asp106.

This sequence belongs to the RNase HII family. Requires Mn(2+) as cofactor. The cofactor is Mg(2+).

It localises to the cytoplasm. The enzyme catalyses Endonucleolytic cleavage to 5'-phosphomonoester.. Endonuclease that specifically degrades the RNA of RNA-DNA hybrids. This Polynucleobacter necessarius subsp. necessarius (strain STIR1) protein is Ribonuclease HII.